A 187-amino-acid chain; its full sequence is MLLDEGWLAEARRVPSPHYDCRPDDENPSLLVVHNISLPPGEFGGPWIDALFTGTIDPNAHPYFAGIAHLRVSAHCLIRRDGEIVQYVPFDKRAWHAGVSSYQGRERCNDFSIGIELEGTDTLAYTDAQYQQLAAVTNALITRYPAIANNMTGHCNIAPERKTDPGPSFDWARFRALVTPSSHKEMT.

In terms of domain architecture, N-acetylmuramoyl-L-alanine amidase spans 30–167; it reads LLVVHNISLP…APERKTDPGP (138 aa). His34 lines the Zn(2+) pocket. Glu116 (proton acceptor) is an active-site residue. The Zn(2+) site is built by His154 and Asp164.

It belongs to the N-acetylmuramoyl-L-alanine amidase 2 family. It depends on Zn(2+) as a cofactor.

The protein localises to the cytoplasm. It carries out the reaction Hydrolyzes the link between N-acetylmuramoyl residues and L-amino acid residues in certain cell-wall glycopeptides.. With respect to regulation, amidase activity is inhibited by metal chelators such as EDTA, dipicolinic acid or 1,10-phenanthroline. Involved in cell wall peptidoglycan recycling. Specifically cleaves the amide bond between the lactyl group of N-acetylmuramic acid and the alpha-amino group of the L-alanine in degradation products containing an anhydro N-acetylmuramyl moiety. Is also involved in beta-lactamase induction. This chain is 1,6-anhydro-N-acetylmuramyl-L-alanine amidase AmpD, found in Citrobacter freundii.